A 125-amino-acid polypeptide reads, in one-letter code: Large ribosomal subunit protein bL12 (125 aa).

This sequence belongs to the bacterial ribosomal protein bL12 family. Homodimer. Part of the ribosomal stalk of the 50S ribosomal subunit. Forms a multimeric L10(L12)X complex, where L10 forms an elongated spine to which 2 to 4 L12 dimers bind in a sequential fashion. Binds GTP-bound translation factors.

Functionally, forms part of the ribosomal stalk which helps the ribosome interact with GTP-bound translation factors. Is thus essential for accurate translation. The polypeptide is Large ribosomal subunit protein bL12 (Delftia acidovorans (strain DSM 14801 / SPH-1)).